A 357-amino-acid polypeptide reads, in one-letter code: RNA-binding protein 43 (357 aa).

The region spanning 15–104 (RTVVVAGLPV…VSLRVSHFGD (90 aa)) is the RRM domain.

This chain is RNA-binding protein 43 (RBM43), found in Homo sapiens (Human).